Consider the following 648-residue polypeptide: Transcription termination factor FttA (648 aa).

The interval 9–76 is KHa; it reads DDILKEIREI…ISVRPDPDIL (68 aa). A KHb region spans residues 77-144; the sequence is LPPEKAEELI…WAPRVVRTPP (68 aa). Residues 185–395 are metallo-beta-lactamase N-terminus; that stretch reads WIRITGLGGF…LVMESTYGGS (211 aa). The Zn(2+) site is built by His-253, His-255, Asp-257, His-258, His-341, and Asp-364. Positions 396-589 are beta-Casp; sequence NDYQMPREEA…MEVHTIDGFS (194 aa). Positions 590–648 are metallo-beta-lactamase C-terminus; that stretch reads GHADRRELMSYVARVRPRPERIITVHGEAHKCLDLSSSIHKKFGISTRAPNNLDAIRLK. His-615 lines the Zn(2+) pocket.

Belongs to the metallo-beta-lactamase superfamily. RNA-metabolizing metallo-beta-lactamase-like family. FttA subfamily. In terms of assembly, homodimer. Probably interacts transiently with RNA polymerase (RNAP), (via at least the RNAP stalk subunits Rpo4 and Rpo7), interacts transiently with the Spt4-Spt5 complex. Zn(2+) is required as a cofactor.

With respect to regulation, transcription termination is stimulated by the Spt4-Spt5 complex. Dipicolinic acid inhibits FttA-mediated termination in vitro and inhibits growth in vivo. In terms of biological role, terminates transcription on the whole genome. Termination is linked to FttA-mediated RNA cleavage and does not require NTP hydrolysis. Cleaves endonucleolytically at the RNA exit channel of RNA polymerase (RNAP); the 5'-3' exonuclease activity of this protein degrades the nascent RNA released from RNAP. Facilitates transcription termination; addition of this factor to stalled transcription elongation complexes (TEC) promotes nascent transcript cleavage and releases RNA polymerase (RNAP) from DNA in vitro. Transcription termination competes with productive transcription elongation. Termination is stimulated by C-rich transcripts and inhibited by G-rich transcripts; the Spt4-Spt5 complex enhances termination on C-less transcripts. Yields an approximately 100 nucleotide RNA, consistent with endonucleolytic cleavage at the RNA exit channel of RNAP. This chain is Transcription termination factor FttA, found in Thermococcus kodakarensis (strain ATCC BAA-918 / JCM 12380 / KOD1) (Pyrococcus kodakaraensis (strain KOD1)).